A 23-amino-acid chain; its full sequence is Coenzyme PQQ synthesis protein A (23 aa).

The segment at residues glutamate 15–tyrosine 19 is a cross-link (pyrroloquinoline quinone (Glu-Tyr)).

This sequence belongs to the PqqA family.

It functions in the pathway cofactor biosynthesis; pyrroloquinoline quinone biosynthesis. Functionally, required for coenzyme pyrroloquinoline quinone (PQQ) biosynthesis. PQQ is probably formed by cross-linking a specific glutamate to a specific tyrosine residue and excising these residues from the peptide. In Colwellia psychrerythraea (strain 34H / ATCC BAA-681) (Vibrio psychroerythus), this protein is Coenzyme PQQ synthesis protein A.